Consider the following 561-residue polypeptide: Terpene synthase 3 (561 aa).

Positions 315, 319, 458, and 466 each coordinate Mg(2+). Residues 315–319 carry the DDXXD motif motif; it reads DDVYD.

Belongs to the terpene synthase family. Tpsa subfamily. The cofactor is Mg(2+). Mn(2+) serves as cofactor. In terms of tissue distribution, mostly expressed in stems amd leaves, and, to a lower extent, in roots and fruits.

It catalyses the reaction (2E,6E)-farnesyl diphosphate = germacrene D + diphosphate. The catalysed reaction is (2E,6E)-farnesyl diphosphate = alpha-copaene + diphosphate. It participates in secondary metabolite biosynthesis; terpenoid biosynthesis. Sesquiterpene synthase involved in the biosynthesis of volatile compounds that contribute to the characteristic flavors of black pepper. Mediates the conversion of (2E,6E)-farnesyl diphosphate (FPP) into alpha-copaene and germacrene D. In Piper nigrum (Black pepper), this protein is Terpene synthase 3.